The following is a 301-amino-acid chain: Porphobilinogen deaminase (301 aa).

Residue Cys-242 is modified to S-(dipyrrolylmethanemethyl)cysteine.

The protein belongs to the HMBS family. In terms of assembly, monomer. The cofactor is dipyrromethane.

It carries out the reaction 4 porphobilinogen + H2O = hydroxymethylbilane + 4 NH4(+). It functions in the pathway porphyrin-containing compound metabolism; protoporphyrin-IX biosynthesis; coproporphyrinogen-III from 5-aminolevulinate: step 2/4. Its function is as follows. Tetrapolymerization of the monopyrrole PBG into the hydroxymethylbilane pre-uroporphyrinogen in several discrete steps. This Rickettsia canadensis (strain McKiel) protein is Porphobilinogen deaminase.